The chain runs to 224 residues: Attacin-A (224 aa).

Positions 1–20 (MQKTSILIVALVALFAITEA) are cleaved as a signal peptide. Positions 21 to 34 (LPSLPTTGPIRVRR) are excised as a propeptide.

The protein belongs to the attacin/sarcotoxin-2 family. In terms of tissue distribution, hemolymph (at protein level).

It localises to the secreted. Hemolymph antibacterial protein. The sequence is that of Attacin-A (AttA) from Drosophila melanogaster (Fruit fly).